The following is a 460-amino-acid chain: Cysteine--tRNA ligase (460 aa).

Residue cysteine 28 coordinates Zn(2+). The short motif at 30–40 is the 'HIGH' region element; it reads MTVYDYCHLGH. Zn(2+) is bound by residues cysteine 209, histidine 234, and glutamate 238. A 'KMSKS' region motif is present at residues 266-270; it reads KMSKS. Lysine 269 is a binding site for ATP.

The protein belongs to the class-I aminoacyl-tRNA synthetase family. As to quaternary structure, monomer. Requires Zn(2+) as cofactor.

It is found in the cytoplasm. It carries out the reaction tRNA(Cys) + L-cysteine + ATP = L-cysteinyl-tRNA(Cys) + AMP + diphosphate. The polypeptide is Cysteine--tRNA ligase (Pseudomonas putida (strain W619)).